The following is a 225-amino-acid chain: Paired immunoglobulin-like type 2 receptor beta-2 (225 aa).

Positions 1–31 (MALLISLPGETPAMAQILLLLSSACLHAGNS) are cleaved as a signal peptide. The Extracellular segment spans residues 32-195 (ARSNGGNDFG…NPSLMNLGAM (164 aa)). Asn90, Asn107, and Asn160 each carry an N-linked (GlcNAc...) asparagine glycan. A helical membrane pass occupies residues 196–216 (VTMLLAKVVVIILVYGWMIFL). Residues 217-225 (RWKQRPDPA) lie on the Cytoplasmic side of the membrane.

The protein resides in the membrane. Paired receptors consist of highly related activating and inhibitory receptors and are widely involved in the regulation of the immune system. PILRB2 is probably a cellular signaling activating receptor that associates with ITAM-bearing adapter molecules on the cell surface. The sequence is that of Paired immunoglobulin-like type 2 receptor beta-2 (Pilrb2) from Mus musculus (Mouse).